A 342-amino-acid polypeptide reads, in one-letter code: Oxygen-dependent coproporphyrinogen-III oxidase (342 aa).

Ser98 serves as a coordination point for substrate. 2 residues coordinate a divalent metal cation: His102 and His112. His112 acts as the Proton donor in catalysis. 114-116 (NYR) is a binding site for substrate. A divalent metal cation contacts are provided by His146 and His176. The interval 266–301 (YVEFNLVWDRGTIFGLQTNGRTESILMSLPPLARWE) is important for dimerization.

It belongs to the aerobic coproporphyrinogen-III oxidase family. As to quaternary structure, homodimer. Requires a divalent metal cation as cofactor.

It localises to the cytoplasm. The enzyme catalyses coproporphyrinogen III + O2 + 2 H(+) = protoporphyrinogen IX + 2 CO2 + 2 H2O. It participates in porphyrin-containing compound metabolism; protoporphyrin-IX biosynthesis; protoporphyrinogen-IX from coproporphyrinogen-III (O2 route): step 1/1. In terms of biological role, involved in the heme and chlorophyll biosynthesis. Catalyzes the aerobic oxidative decarboxylation of propionate groups of rings A and B of coproporphyrinogen-III to yield the vinyl groups in protoporphyrinogen-IX. The protein is Oxygen-dependent coproporphyrinogen-III oxidase of Prochlorococcus marinus (strain MIT 9515).